Reading from the N-terminus, the 243-residue chain is R-spondin-2 (243 aa).

The first 23 residues, 1-23, serve as a signal peptide directing secretion; it reads MRFCLFSFALIILNCMDYSQCQG. Intrachain disulfides connect C40-C46, C43-C52, C55-C74, C78-C93, C96-C104, C101-C110, C113-C124, C128-C141, C145-C187, C156-C163, and C196-C203. The FU repeat unit spans residues 90–134; the sequence is MNRCARCRIENCDSCFSKDFCTKCKVGFYLHRGRCFDECPDGFAP. One can recognise a TSP type-1 domain in the interval 144 to 204; sequence GCEVGHWSEW…RCKMAMRHCP (61 aa). N-linked (GlcNAc...) asparagine glycosylation is present at N160. The segment covering 204 to 224 has biased composition (basic residues); the sequence is PGGKRTPKAKEKRNKKKRRKL. Positions 204–243 are disordered; that stretch reads PGGKRTPKAKEKRNKKKRRKLIERAQEQHSVFLATDRVNQ.

The protein belongs to the R-spondin family. Interacts with WNT1. Binds heparin. Interacts with LGR4, LGR5 and LGR6.

Its subcellular location is the secreted. In terms of biological role, activator of the canonical Wnt signaling pathway by acting as a ligand for LGR4-6 receptors. Upon binding to LGR4-6 (LGR4, LGR5 or LGR6), LGR4-6 associate with phosphorylated LRP6 and frizzled receptors that are activated by extracellular Wnt receptors, triggering the canonical Wnt signaling pathway to increase expression of target genes. Also regulates the canonical Wnt/beta-catenin-dependent pathway and non-canonical Wnt signaling by acting as an inhibitor of ZNRF3, an important regulator of the Wnt signaling pathway. Probably also acts as a ligand for frizzled and LRP receptors. During embryonic development, plays a crucial role in limb specification, amplifying the Wnt signaling pathway independently of LGR4-6 receptors, possibly by acting as a direct antagonistic ligand to RNF43 and ZNRF3, hence governing the number of limbs an embryo should form. The sequence is that of R-spondin-2 (Rspo2) from Mus musculus (Mouse).